The following is a 436-amino-acid chain: Trigger factor (436 aa).

One can recognise a PPIase FKBP-type domain in the interval 163 to 248 (GDRVTVDFEG…VKKIEAAHLP (86 aa)).

It belongs to the FKBP-type PPIase family. Tig subfamily.

The protein resides in the cytoplasm. The catalysed reaction is [protein]-peptidylproline (omega=180) = [protein]-peptidylproline (omega=0). Its function is as follows. Involved in protein export. Acts as a chaperone by maintaining the newly synthesized protein in an open conformation. Functions as a peptidyl-prolyl cis-trans isomerase. The chain is Trigger factor from Acidovorax ebreus (strain TPSY) (Diaphorobacter sp. (strain TPSY)).